A 417-amino-acid chain; its full sequence is Snake venom metalloproteinase acutolysin-C (417 aa).

Residues 1-20 form the signal peptide; sequence MIQVLLVTICLAALPYQGSS. The propeptide at 21–189 is activation peptide; the sequence is IMLESGKVND…KRPSRLNLTP (169 aa). The 196-residue stretch at 197–392 folds into the Peptidase M12B domain; sequence TSVNLQLIVD…KKPKCIHKKS (196 aa). Disulfide bonds link Cys308-Cys387, Cys349-Cys371, and Cys351-Cys354. His333 provides a ligand contact to Zn(2+). The active site involves Glu334. The Zn(2+) site is built by His337 and His343. The propeptide occupies 393–417; the sequence is LKTDTVSTSVSGNEPLDDNVDGFHA. A disordered region spans residues 398 to 417; it reads VSTSVSGNEPLDDNVDGFHA. Residues 407 to 417 are compositionally biased toward acidic residues; that stretch reads PLDDNVDGFHA.

This sequence belongs to the venom metalloproteinase (M12B) family. P-I subfamily. In terms of assembly, monomer. It depends on Zn(2+) as a cofactor. Expressed by the venom gland.

The protein resides in the secreted. Its function is as follows. This protein is an alkaline zinc metalloprotease from snake venom that possesses weak hemorrhagic activity. The protein is Snake venom metalloproteinase acutolysin-C of Deinagkistrodon acutus (Hundred-pace snake).